Consider the following 319-residue polypeptide: Succinoglycan biosynthesis protein ExoW (319 aa).

The protein belongs to the glycosyltransferase 2 family.

The protein resides in the cell membrane. It participates in glycan metabolism; exopolysaccharide biosynthesis. Glycosyltransferase required for the synthesis of succinoglycan (EPS I). Needed for the addition of the seventh sugar (glucose), catalyzes the formation of a beta-1,3 linkage between the seventh and eighth sugar. The chain is Succinoglycan biosynthesis protein ExoW (exoW) from Rhizobium meliloti (strain 1021) (Ensifer meliloti).